Consider the following 150-residue polypeptide: 6,7-dimethyl-8-ribityllumazine synthase (150 aa).

Residues Phe11, 43-45 (VFD), and 67-69 (AVI) each bind 5-amino-6-(D-ribitylamino)uracil. 72-73 (AT) lines the (2S)-2-hydroxy-3-oxobutyl phosphate pocket. His75 (proton donor) is an active-site residue. Position 100 (Leu100) interacts with 5-amino-6-(D-ribitylamino)uracil. Arg115 serves as a coordination point for (2S)-2-hydroxy-3-oxobutyl phosphate.

This sequence belongs to the DMRL synthase family.

The catalysed reaction is (2S)-2-hydroxy-3-oxobutyl phosphate + 5-amino-6-(D-ribitylamino)uracil = 6,7-dimethyl-8-(1-D-ribityl)lumazine + phosphate + 2 H2O + H(+). Its pathway is cofactor biosynthesis; riboflavin biosynthesis; riboflavin from 2-hydroxy-3-oxobutyl phosphate and 5-amino-6-(D-ribitylamino)uracil: step 1/2. Functionally, catalyzes the formation of 6,7-dimethyl-8-ribityllumazine by condensation of 5-amino-6-(D-ribitylamino)uracil with 3,4-dihydroxy-2-butanone 4-phosphate. This is the penultimate step in the biosynthesis of riboflavin. The sequence is that of 6,7-dimethyl-8-ribityllumazine synthase from Pyrobaculum calidifontis (strain DSM 21063 / JCM 11548 / VA1).